Consider the following 198-residue polypeptide: tRNA (pseudouridine(54)-N(1))-methyltransferase (198 aa).

S-adenosyl-L-methionine-binding positions include Leu130, Gly153, 176–181 (LSPLEL), and Cys186.

The protein belongs to the methyltransferase superfamily. TrmY family. As to quaternary structure, homodimer.

It is found in the cytoplasm. The enzyme catalyses pseudouridine(54) in tRNA + S-adenosyl-L-methionine = N(1)-methylpseudouridine(54) in tRNA + S-adenosyl-L-homocysteine + H(+). Functionally, specifically catalyzes the N1-methylation of pseudouridine at position 54 (Psi54) in tRNAs. This chain is tRNA (pseudouridine(54)-N(1))-methyltransferase, found in Methanococcus vannielii (strain ATCC 35089 / DSM 1224 / JCM 13029 / OCM 148 / SB).